The sequence spans 269 residues: Cytochrome c oxidase subunit 3 (269 aa).

A run of 7 helical transmembrane segments spans residues 21 to 41, 45 to 65, 90 to 110, 138 to 160, 167 to 187, 205 to 225, and 247 to 267; these read PWPI…ALAM, IGNM…ATLW, GFLL…WAYF, PLLN…HALI, ALSG…CQYI, FYAG…MLAI, and VIYL…FYWW.

The protein belongs to the cytochrome c oxidase subunit 3 family. In terms of assembly, component of the cytochrome c oxidase (complex IV, CIV), a multisubunit enzyme composed of a catalytic core of 3 subunits and several supernumerary subunits. The complex exists as a monomer or a dimer and forms supercomplexes (SCs) in the inner mitochondrial membrane with ubiquinol-cytochrome c oxidoreductase (cytochrome b-c1 complex, complex III, CIII).

The protein localises to the mitochondrion inner membrane. The enzyme catalyses 4 Fe(II)-[cytochrome c] + O2 + 8 H(+)(in) = 4 Fe(III)-[cytochrome c] + 2 H2O + 4 H(+)(out). Component of the cytochrome c oxidase, the last enzyme in the mitochondrial electron transport chain which drives oxidative phosphorylation. The respiratory chain contains 3 multisubunit complexes succinate dehydrogenase (complex II, CII), ubiquinol-cytochrome c oxidoreductase (cytochrome b-c1 complex, complex III, CIII) and cytochrome c oxidase (complex IV, CIV), that cooperate to transfer electrons derived from NADH and succinate to molecular oxygen, creating an electrochemical gradient over the inner membrane that drives transmembrane transport and the ATP synthase. Cytochrome c oxidase is the component of the respiratory chain that catalyzes the reduction of oxygen to water. Electrons originating from reduced cytochrome c in the intermembrane space (IMS) are transferred via the dinuclear copper A center (CU(A)) of subunit 2 and heme A of subunit 1 to the active site in subunit 1, a binuclear center (BNC) formed by heme A3 and copper B (CU(B)). The BNC reduces molecular oxygen to 2 water molecules using 4 electrons from cytochrome c in the IMS and 4 protons from the mitochondrial matrix. This is Cytochrome c oxidase subunit 3 (COX3) from Lachancea kluyveri (strain ATCC 58438 / CBS 3082 / BCRC 21498 / NBRC 1685 / JCM 7257 / NCYC 543 / NRRL Y-12651) (Yeast).